We begin with the raw amino-acid sequence, 297 residues long: Glutamyl-Q tRNA(Asp) synthetase (297 aa).

Residues 9–13 (RFAPS) and Glu-45 contribute to the L-glutamate site. The short motif at 12-22 (PSPTGPLHFGS) is the 'HIGH' region element. Residues Cys-101, Cys-103, and Cys-118 each contribute to the Zn(2+) site. L-glutamate contacts are provided by Tyr-170 and Arg-188. Positions 226 to 230 (KLSKS) match the 'KMSKS' region motif. Lys-229 is a binding site for ATP.

The protein belongs to the class-I aminoacyl-tRNA synthetase family. GluQ subfamily. It depends on Zn(2+) as a cofactor.

In terms of biological role, catalyzes the tRNA-independent activation of glutamate in presence of ATP and the subsequent transfer of glutamate onto a tRNA(Asp). Glutamate is transferred on the 2-amino-5-(4,5-dihydroxy-2-cyclopenten-1-yl) moiety of the queuosine in the wobble position of the QUC anticodon. The chain is Glutamyl-Q tRNA(Asp) synthetase from Xanthomonas campestris pv. campestris (strain 8004).